Consider the following 236-residue polypeptide: Purine nucleoside phosphorylase DeoD-type (236 aa).

Histidine 4 contacts a purine D-ribonucleoside. Residues glycine 20, arginine 24, arginine 43, and 87-90 contribute to the phosphate site; that span reads RVGS. Residues 179–181 and 203–204 each bind a purine D-ribonucleoside; these read EME and SD. The active-site Proton donor is aspartate 204.

It belongs to the PNP/UDP phosphorylase family. As to quaternary structure, homohexamer; trimer of homodimers.

The catalysed reaction is a purine D-ribonucleoside + phosphate = a purine nucleobase + alpha-D-ribose 1-phosphate. It catalyses the reaction a purine 2'-deoxy-D-ribonucleoside + phosphate = a purine nucleobase + 2-deoxy-alpha-D-ribose 1-phosphate. Functionally, catalyzes the reversible phosphorolytic breakdown of the N-glycosidic bond in the beta-(deoxy)ribonucleoside molecules, with the formation of the corresponding free purine bases and pentose-1-phosphate. This Limosilactobacillus reuteri (strain DSM 20016) (Lactobacillus reuteri) protein is Purine nucleoside phosphorylase DeoD-type.